The chain runs to 340 residues: S-adenosylmethionine:tRNA ribosyltransferase-isomerase (340 aa).

The protein belongs to the QueA family. Monomer.

It localises to the cytoplasm. The enzyme catalyses 7-aminomethyl-7-carbaguanosine(34) in tRNA + S-adenosyl-L-methionine = epoxyqueuosine(34) in tRNA + adenine + L-methionine + 2 H(+). Its pathway is tRNA modification; tRNA-queuosine biosynthesis. Its function is as follows. Transfers and isomerizes the ribose moiety from AdoMet to the 7-aminomethyl group of 7-deazaguanine (preQ1-tRNA) to give epoxyqueuosine (oQ-tRNA). The chain is S-adenosylmethionine:tRNA ribosyltransferase-isomerase from Chlorobaculum parvum (strain DSM 263 / NCIMB 8327) (Chlorobium vibrioforme subsp. thiosulfatophilum).